Consider the following 334-residue polypeptide: MLTDLFYSTFGCLYSPTSTMDVMGTARRKTVVRLNVYDMYWLNDYASNIGVGIFHSGIEVFGVEYAYGGHPYQFSGVFENSPQDAEELGETFKFKESIVVGETERSTSDIRKLIKSLGEDFRGDRYHLISRNCNHFSAVLARELTGKDIPGWINRLANLSGSIPFLEKCIPQEWLTPIVLQASVDEKKRGSVDSAEEATEKLVVRSLNDSRTTILDNRTANGAIIMSASSSNSDRICMSPSSSSSASSCDTLDYDDLIVQTPSTFSSEKKSRSNSPPIFRIWNTIKATINGTQQTAPTGAATVIPASSASNIGKTNSTPGTTSNGLAKPTCSEC.

Residues 30–174 (TVVRLNVYDM…FLEKCIPQEW (145 aa)) form the PPPDE domain. Residues His55 and Cys133 contribute to the active site. Positions 310-325 (SNIGKTNSTPGTTSNG) are enriched in polar residues. Residues 310 to 334 (SNIGKTNSTPGTTSNGLAKPTCSEC) form a disordered region.

This sequence belongs to the DeSI family. As to expression, expressed in the pharynx, hypodermis, intestine, head neuron and tail neuron.

The protein localises to the cytoplasm. The protein resides in the nucleus. In terms of biological role, protease which deconjugates SUMO from some substrate proteins. Has isopeptidase but not SUMO-processing activity. Collaborates with ubql-1 in the export of ubiquitinated proteins from the nucleus to the cytoplasm. The protein is Desumoylating isopeptidase 1 homolog of Caenorhabditis elegans.